The chain runs to 397 residues: Acetate kinase (397 aa).

Asparagine 7 contacts Mg(2+). Lysine 14 contacts ATP. Arginine 90 contributes to the substrate binding site. The active-site Proton donor/acceptor is aspartate 147. ATP-binding positions include 207 to 211 (HLGNG), 282 to 284 (DFR), and 330 to 334 (GLGEN). Residue glutamate 383 participates in Mg(2+) binding.

It belongs to the acetokinase family. Homodimer. Requires Mg(2+) as cofactor. The cofactor is Mn(2+).

The protein resides in the cytoplasm. The catalysed reaction is acetate + ATP = acetyl phosphate + ADP. It functions in the pathway metabolic intermediate biosynthesis; acetyl-CoA biosynthesis; acetyl-CoA from acetate: step 1/2. In terms of biological role, catalyzes the formation of acetyl phosphate from acetate and ATP. Can also catalyze the reverse reaction. The polypeptide is Acetate kinase (Clostridium botulinum (strain Kyoto / Type A2)).